The following is a 368-amino-acid chain: Transcription factor TGA7 (368 aa).

Over residues 70–82 (HNQIEAEQPSSND) the composition is skewed to polar residues. Residues 70–89 (HNQIEAEQPSSNDNQDDDGR) are disordered. The bZIP domain maps to 91-151 (HDKMKRRLAQ…LGPSGSINTG (61 aa)). 2 coiled-coil regions span residues 92 to 142 (DKMK…QGHL) and 252 to 285 (DQQI…SLAE). A basic motif region spans residues 93–113 (KMKRRLAQNREAARKSRLRKK). The segment at 119-133 (LEESRLKLSQLEQEL) is leucine-zipper. The DOG1 domain maps to 152–363 (IASFEMEYSH…RALSSLWAAR (212 aa)).

Belongs to the bZIP family. In terms of assembly, binds DNA as a dimer. Interacts with NPR1 and NPR4. Interacts with GRXC7/ROXY1.

Its subcellular location is the nucleus. In terms of biological role, transcriptional activator that binds specifically to the DNA sequence 5'-TGACG-3'. Recognizes ocs elements like the as-1 motif of the cauliflower mosaic virus 35S promoter. Binding to the as-1-like cis elements mediate auxin- and salicylic acid-inducible transcription. May be involved in the induction of the systemic acquired resistance (SAR) via its interaction with NPR1. The protein is Transcription factor TGA7 (TGA7) of Arabidopsis thaliana (Mouse-ear cress).